The sequence spans 376 residues: Lipoyl synthase, mitochondrial (376 aa).

The [4Fe-4S] cluster site is built by cysteine 102, cysteine 107, cysteine 113, cysteine 133, cysteine 137, cysteine 140, and serine 348. The Radical SAM core domain maps to 116–337 (GGEDKTATAT…EEVGGEMGFA (222 aa)).

This sequence belongs to the radical SAM superfamily. Lipoyl synthase family. It depends on [4Fe-4S] cluster as a cofactor.

The protein resides in the mitochondrion. It catalyses the reaction [[Fe-S] cluster scaffold protein carrying a second [4Fe-4S](2+) cluster] + N(6)-octanoyl-L-lysyl-[protein] + 2 oxidized [2Fe-2S]-[ferredoxin] + 2 S-adenosyl-L-methionine + 4 H(+) = [[Fe-S] cluster scaffold protein] + N(6)-[(R)-dihydrolipoyl]-L-lysyl-[protein] + 4 Fe(3+) + 2 hydrogen sulfide + 2 5'-deoxyadenosine + 2 L-methionine + 2 reduced [2Fe-2S]-[ferredoxin]. Its pathway is protein modification; protein lipoylation via endogenous pathway; protein N(6)-(lipoyl)lysine from octanoyl-[acyl-carrier-protein]: step 2/2. Functionally, catalyzes the radical-mediated insertion of two sulfur atoms into the C-6 and C-8 positions of the octanoyl moiety bound to the lipoyl domains of lipoate-dependent enzymes, thereby converting the octanoylated domains into lipoylated derivatives. This is Lipoyl synthase, mitochondrial from Branchiostoma floridae (Florida lancelet).